Reading from the N-terminus, the 201-residue chain is MSASLSQLVHQLSARFNNQQQAFDNPPLYAHIVVNCRPLVHLLPGSLLIEQSYAMDPLKPYRIRVLRAQTRDEKLIIFSYSLSDEQKYWGSVYEPERMLKIEEKDLQAIEGCNYIVRKKNSNFIGEVEPGCRCLVDRKGVTTYIVSKFELTNKGEMRTLDRGHNPVTHEQLWGSLGGVFEFNRTTDFSKEIPYDWIEEWKK.

The protein belongs to the CpcT/CpeT biliprotein lyase family.

It is found in the plastid. The protein resides in the organellar chromatophore. Its function is as follows. Covalently attaches a chromophore to Cys residue(s) of phycobiliproteins. The protein is Chromophore lyase CpcT/CpeT of Paulinella chromatophora.